We begin with the raw amino-acid sequence, 974 residues long: Protein bicaudal C homolog 1 (974 aa).

The segment at 1 to 50 (MAAQGEPGYLAAQSDPGSNSERSTDSPVPGSEDDLVAGATLHSPEWSEER) is disordered. A phosphoserine mark is found at serine 26, serine 31, and serine 43. KH domains follow at residues 132–199 (RVTL…RVRI) and 284–348 (PVST…RQYL). Lysine 398 is subject to N6-acetyllysine. Residues serine 576, serine 612, and serine 679 each carry the phosphoserine modification. Disordered regions lie at residues 593–644 (VLSA…GDLK), 665–719 (GTKN…HLAP), and 783–846 (YKPT…KSTE). Polar residues predominate over residues 602–619 (SIQTSGSEQTSPKSSPTE). Basic and acidic residues predominate over residues 690–703 (LADKKAPGSERAAE). The region spanning 873 to 936 (FKGSDLPELF…LLAISELNKN (64 aa)) is the SAM domain.

This sequence belongs to the BicC family. In terms of assembly, interacts (via KH domains) with ANKS6 (via SAM domain) in an RNA-dependent manner. Interacts with ANKS3.

It localises to the cytoplasm. Putative RNA-binding protein. Acts as a negative regulator of Wnt signaling. May be involved in regulating gene expression during embryonic development. The polypeptide is Protein bicaudal C homolog 1 (BICC1) (Homo sapiens (Human)).